The following is a 324-amino-acid chain: Beta-ketoacyl-[acyl-carrier-protein] synthase III (324 aa).

Catalysis depends on residues cysteine 113 and histidine 251. The segment at 252–256 (QANKR) is ACP-binding. Residue asparagine 281 is part of the active site.

Belongs to the thiolase-like superfamily. FabH family. Homodimer.

The protein localises to the cytoplasm. It carries out the reaction malonyl-[ACP] + acetyl-CoA + H(+) = 3-oxobutanoyl-[ACP] + CO2 + CoA. It participates in lipid metabolism; fatty acid biosynthesis. In terms of biological role, catalyzes the condensation reaction of fatty acid synthesis by the addition to an acyl acceptor of two carbons from malonyl-ACP. Catalyzes the first condensation reaction which initiates fatty acid synthesis and may therefore play a role in governing the total rate of fatty acid production. Possesses both acetoacetyl-ACP synthase and acetyl transacylase activities. Its substrate specificity determines the biosynthesis of branched-chain and/or straight-chain of fatty acids. The polypeptide is Beta-ketoacyl-[acyl-carrier-protein] synthase III (Bartonella henselae (strain ATCC 49882 / DSM 28221 / CCUG 30454 / Houston 1) (Rochalimaea henselae)).